The sequence spans 133 residues: Small ribosomal subunit protein uS9 (133 aa).

This sequence belongs to the universal ribosomal protein uS9 family.

This Picrophilus torridus (strain ATCC 700027 / DSM 9790 / JCM 10055 / NBRC 100828 / KAW 2/3) protein is Small ribosomal subunit protein uS9.